The sequence spans 47 residues: Sperm protamine P1 (47 aa).

Belongs to the protamine P1 family. As to expression, testis.

The protein localises to the nucleus. It is found in the chromosome. Functionally, protamines substitute for histones in the chromatin of sperm during the haploid phase of spermatogenesis. They compact sperm DNA into a highly condensed, stable and inactive complex. This Myotis daubentonii (Daubenton's bat) protein is Sperm protamine P1 (PRM1).